Consider the following 83-residue polypeptide: Defensin-like protein 194 (83 aa).

The first 27 residues, 1-27 (MAMKSVSNFAIFLILFLVTSEISEIEA), serve as a signal peptide directing secretion. Cystine bridges form between cysteine 32–cysteine 78, cysteine 44–cysteine 68, cysteine 53–cysteine 73, and cysteine 57–cysteine 75.

It belongs to the DEFL family. Protease inhibitor I18 (RTI/MTI-2) subfamily.

The protein resides in the secreted. This chain is Defensin-like protein 194 (ATTI3), found in Arabidopsis thaliana (Mouse-ear cress).